The chain runs to 117 residues: Putative cysteine proteinase inhibitor 7 (117 aa).

Positions 1 to 24 (MTMRTSSLLLAAVAVVAIVAGATA) are cleaved as a signal peptide. One can recognise a Cystatin domain in the interval 28–84 (GSWEPVDINDPHVQELGRWAVAEEDRGVAAGGLTFERVTDGEKQVVAGVNYRLTLEA). A Secondary area of contact motif is present at residues 71–75 (QVVAG).

It belongs to the cystatin family. Phytocystatin subfamily.

The protein localises to the secreted. In terms of biological role, specific inhibitor of cysteine proteinases. Probably involved in the regulation of endogenous processes and in defense against pests and pathogens. This chain is Putative cysteine proteinase inhibitor 7, found in Oryza sativa subsp. japonica (Rice).